We begin with the raw amino-acid sequence, 479 residues long: BRAP2 RING ZnF UBP domain-containing protein 2 (479 aa).

The RING-type; atypical zinc finger occupies 167–207 (CPVCLERLDQDTGGILTTMCNHSFHCSCISNWPDSSCPVCR). Residues 201-294 (SSCPVCRYCQ…GKLVELNSHG (94 aa)) form a UBP-type; degenerate zinc finger. Zn(2+)-binding residues include Cys-218, Cys-221, Cys-230, Cys-233, Cys-238, His-245, His-249, and His-255. Residues 328–442 (NELLQAQLEN…MAQMDGESEV (115 aa)) adopt a coiled-coil conformation. The tract at residues 434 to 479 (AQMDGESEVSETKEVQDATVSTTNTSSSGAGNVIHANKKKSNRRKG) is disordered. Positions 451-466 (ATVSTTNTSSSGAGNV) are enriched in low complexity. A compositionally biased stretch (basic residues) spans 469–479 (ANKKKSNRRKG).

Component of the heteromeric E3 ligase complex made of BRIZ1 and BRIZ2. Forms heterooligomers with BRIZ1 via coiled-coil domains.

The catalysed reaction is S-ubiquitinyl-[E2 ubiquitin-conjugating enzyme]-L-cysteine + [acceptor protein]-L-lysine = [E2 ubiquitin-conjugating enzyme]-L-cysteine + N(6)-ubiquitinyl-[acceptor protein]-L-lysine.. Its pathway is protein modification; protein ubiquitination. Its function is as follows. RING-type ubiquitin E3 ligase that binds ubiquitin and is required for seed germination and post-germination growth. The chain is BRAP2 RING ZnF UBP domain-containing protein 2 from Arabidopsis thaliana (Mouse-ear cress).